A 128-amino-acid chain; its full sequence is Ribosome-binding factor A (128 aa).

This sequence belongs to the RbfA family. As to quaternary structure, monomer. Binds 30S ribosomal subunits, but not 50S ribosomal subunits or 70S ribosomes.

It localises to the cytoplasm. Functionally, one of several proteins that assist in the late maturation steps of the functional core of the 30S ribosomal subunit. Associates with free 30S ribosomal subunits (but not with 30S subunits that are part of 70S ribosomes or polysomes). Required for efficient processing of 16S rRNA. May interact with the 5'-terminal helix region of 16S rRNA. The polypeptide is Ribosome-binding factor A (Microcystis aeruginosa (strain NIES-843 / IAM M-2473)).